Consider the following 178-residue polypeptide: S-alkylcysteine N-acetyltransferase (178 aa).

The region spanning Asp-4–Ile-163 is the N-acetyltransferase domain.

Belongs to the acetyltransferase family.

The enzyme catalyses an S-substituted L-cysteine + acetyl-CoA = an N-acetyl-L-cysteine-S-conjugate + CoA + H(+). The catalysed reaction is S-benzyl-L-cysteine + acetyl-CoA = N-acetyl-S-benzyl-L-cysteine + CoA + H(+). It catalyses the reaction S-methyl-L-cysteine + acetyl-CoA = N-acetyl-S-methyl-L-cysteine + CoA + H(+). It functions in the pathway amino-acid metabolism. In terms of biological role, involved in a cysteine salvage pathway from S-alkylcysteine. Catalyzes the first step in this pathway, i.e. the amine acetylation of an S-alkylcysteine with a preference for S-benzyl-L-cysteine over S-methyl-L-cysteine. This pathway is likely important in the catabolism of alkylated cysteine generated by proteolysis of alkylated glutathione formed in the detoxification of a wide range of electrophiles. This Bacillus subtilis (strain 168) protein is S-alkylcysteine N-acetyltransferase.